The sequence spans 264 residues: Intermembrane phospholipid transport system ATP-binding protein MlaF (264 aa).

The ABC transporter domain maps to 6-242 (IEVKNLTFKR…QDLRVVQFLK (237 aa)). 38–45 (GPSGIGKT) lines the ATP pocket.

Belongs to the ABC transporter superfamily. MlaF family. As to quaternary structure, the complex is composed of two ATP-binding proteins (MlaF), two transmembrane proteins (MlaE), two cytoplasmic solute-binding proteins (MlaB) and six periplasmic solute-binding proteins (MlaD).

It is found in the cell inner membrane. Part of the ABC transporter complex MlaFEDB, which is involved in a phospholipid transport pathway that maintains lipid asymmetry in the outer membrane by retrograde trafficking of phospholipids from the outer membrane to the inner membrane. Responsible for energy coupling to the transport system. This Haemophilus influenzae (strain ATCC 51907 / DSM 11121 / KW20 / Rd) protein is Intermembrane phospholipid transport system ATP-binding protein MlaF.